We begin with the raw amino-acid sequence, 458 residues long: Argininosuccinate lyase (458 aa).

This sequence belongs to the lyase 1 family. Argininosuccinate lyase subfamily.

The protein resides in the cytoplasm. The enzyme catalyses 2-(N(omega)-L-arginino)succinate = fumarate + L-arginine. The protein operates within amino-acid biosynthesis; L-arginine biosynthesis; L-arginine from L-ornithine and carbamoyl phosphate: step 3/3. This is Argininosuccinate lyase from Lachnospira eligens (strain ATCC 27750 / DSM 3376 / VPI C15-48 / C15-B4) (Eubacterium eligens).